A 233-amino-acid chain; its full sequence is Putative N-acetylmannosamine-6-phosphate 2-epimerase (233 aa).

This sequence belongs to the NanE family.

It catalyses the reaction an N-acyl-D-glucosamine 6-phosphate = an N-acyl-D-mannosamine 6-phosphate. It participates in amino-sugar metabolism; N-acetylneuraminate degradation; D-fructose 6-phosphate from N-acetylneuraminate: step 3/5. Converts N-acetylmannosamine-6-phosphate (ManNAc-6-P) to N-acetylglucosamine-6-phosphate (GlcNAc-6-P). The polypeptide is Putative N-acetylmannosamine-6-phosphate 2-epimerase (Yersinia pseudotuberculosis serotype IB (strain PB1/+)).